The sequence spans 443 residues: Nuclear hormone receptor family member nhr-60 (443 aa).

The segment covering 1–20 (MIQSSSSISQDSLDLPSILS) has biased composition (low complexity). Residues 1-40 (MIQSSSSISQDSLDLPSILSTFSADEPEDEPSPTAVKSTK) form a disordered region. Residues 44-121 (PTECLICGNS…VGMNPLAMEV (78 aa)) constitute a DNA-binding region (nuclear receptor). 2 NR C4-type zinc fingers span residues 47 to 67 (CLIC…CNGC) and 83 to 104 (CKAK…CRAC). In terms of domain architecture, NR LBD spans 196 to 439 (NEFSGLEYLL…KDLVMRVIED (244 aa)). The disordered stretch occupies residues 225–249 (LRRDQLGPPRLPKPPSPGKPRDSQH). The segment covering 233-242 (PRLPKPPSPG) has biased composition (pro residues).

It belongs to the nuclear hormone receptor family.

Its subcellular location is the nucleus. In terms of biological role, orphan nuclear receptor (Potential). Required for embryonic and larval morphogenesis and probably for seam cell positioning and migration. The protein is Nuclear hormone receptor family member nhr-60 of Caenorhabditis elegans.